The chain runs to 61 residues: Large ribosomal subunit protein bL32 (61 aa).

A compositionally biased stretch (basic residues) spans 1 to 16 (MAVPKRKTSPSKRGMR). The interval 1 to 61 (MAVPKRKTSP…RSVLTPKNSG (61 aa)) is disordered. The span at 28-44 (VEDKDSGELRRPHHIDL) shows a compositional bias: basic and acidic residues.

The protein belongs to the bacterial ribosomal protein bL32 family.

This is Large ribosomal subunit protein bL32 from Bartonella bacilliformis (strain ATCC 35685 / KC583 / Herrer 020/F12,63).